Reading from the N-terminus, the 91-residue chain is MTEAKNPRSLVGTVVSNLMDKSIVVNVERRIQHPLYKKYIRRSKKFHAHDAENICHIGDIVKIEECRPLSKTKSWRLVSVLAEGVIEGDNA.

Belongs to the universal ribosomal protein uS17 family. In terms of assembly, part of the 30S ribosomal subunit.

In terms of biological role, one of the primary rRNA binding proteins, it binds specifically to the 5'-end of 16S ribosomal RNA. The sequence is that of Small ribosomal subunit protein uS17 from Acidithiobacillus ferrooxidans (strain ATCC 23270 / DSM 14882 / CIP 104768 / NCIMB 8455) (Ferrobacillus ferrooxidans (strain ATCC 23270)).